The following is a 132-amino-acid chain: Small ribosomal subunit protein uS8 (132 aa).

Belongs to the universal ribosomal protein uS8 family. As to quaternary structure, part of the 30S ribosomal subunit. Contacts proteins S5 and S12.

One of the primary rRNA binding proteins, it binds directly to 16S rRNA central domain where it helps coordinate assembly of the platform of the 30S subunit. The protein is Small ribosomal subunit protein uS8 of Borrelia turicatae (strain 91E135).